Consider the following 438-residue polypeptide: UDP-N-acetylmuramoylalanine--D-glutamate ligase (438 aa).

112–118 (GSNGKST) is a binding site for ATP.

It belongs to the MurCDEF family.

It localises to the cytoplasm. It catalyses the reaction UDP-N-acetyl-alpha-D-muramoyl-L-alanine + D-glutamate + ATP = UDP-N-acetyl-alpha-D-muramoyl-L-alanyl-D-glutamate + ADP + phosphate + H(+). It functions in the pathway cell wall biogenesis; peptidoglycan biosynthesis. In terms of biological role, cell wall formation. Catalyzes the addition of glutamate to the nucleotide precursor UDP-N-acetylmuramoyl-L-alanine (UMA). This Salmonella paratyphi A (strain ATCC 9150 / SARB42) protein is UDP-N-acetylmuramoylalanine--D-glutamate ligase.